Consider the following 826-residue polypeptide: E3 ubiquitin ligase PARAQUAT TOLERANCE 3 (826 aa).

In terms of domain architecture, DWNN spans 3-76; that stretch reads IYYKFKSARD…NTSVLIRRVP (74 aa). Residues 203-216 form a CCHC-type zinc finger; it reads CHRCNVSGHFIQHC. Residue Ser-278 is modified to Phosphoserine. The segment at 288–326 adopts an RING-type; degenerate zinc-finger fold; it reads CPLCKEVMRDAALASKCCLKSYCDKCIRDHIIAKSMCVC. 3 stretches are compositionally biased toward polar residues: residues 356–365, 396–406, and 435–454; these read SAENAGSMCQ, PSNNNETSTLK, and NIQG…NTQP. 3 disordered regions span residues 356–406, 435–488, and 585–826; these read SAEN…STLK, NIQG…GPDY, and HPIM…RARA. The residue at position 397 (Ser-397) is a Phosphoserine. Basic and acidic residues predominate over residues 588–624; that stretch reads MGREEFEAKKTEMKRKRENEIRRSEGGNVVRDSEKSR. Positions 625–635 are enriched in polar residues; that stretch reads IMNNSAVTSSP. The span at 651–667 shows a compositional bias: basic and acidic residues; it reads DYDRRRRSDRSSPERQS. 2 short sequence motifs (nuclear localization signal) span residues 668–675 and 695–702; these read SRRFTSPP and DRRRDRPR. Residues 680–706 show a composition bias toward basic and acidic residues; that stretch reads RKSERDRHHDLDSEHDRRRDRPRETDR. Residues 790–799 are compositionally biased toward basic residues; the sequence is FKRKPSRYKR. Position 800 is a phosphoserine (Ser-800). A compositionally biased stretch (basic and acidic residues) spans 809 to 826; it reads GDEHFRHSKRSKGERARA.

As to quaternary structure, interacts with PRMT13/PRMT4B in the nucleus. In terms of tissue distribution, expressed constitutively in both shoot and root tissues.

It localises to the nucleus. The enzyme catalyses S-ubiquitinyl-[E2 ubiquitin-conjugating enzyme]-L-cysteine + [acceptor protein]-L-lysine = [E2 ubiquitin-conjugating enzyme]-L-cysteine + N(6)-ubiquitinyl-[acceptor protein]-L-lysine.. Functionally, E3 ubiquitin ligase acting as a negative regulator of oxidative stress tolerance, probably by mediating 26S proteasome-mediated degradation of PRMT13/PRMT4B, thus preventing APX1 and GPX1 accumulation via the reduction of histone H3 methylation (H3R17me2a). Confers sensitivity to cadmium CdCl(2) and salt NaCl stresses. This is E3 ubiquitin ligase PARAQUAT TOLERANCE 3 from Arabidopsis thaliana (Mouse-ear cress).